The sequence spans 479 residues: Cysteine--tRNA ligase (479 aa).

C29 lines the Zn(2+) pocket. The short motif at 31–41 (ATVQGAPHIGH) is the 'HIGH' region element. Residues 171–197 (QRVEDMQDAPDADPRGKRDPRDFALWK) form a disordered region. The segment covering 182 to 197 (ADPRGKRDPRDFALWK) has biased composition (basic and acidic residues). Zn(2+) is bound by residues C224, H249, and E253. Residues 280-284 (KMSKS) carry the 'KMSKS' region motif. An ATP-binding site is contributed by K283.

The protein belongs to the class-I aminoacyl-tRNA synthetase family. In terms of assembly, monomer. Zn(2+) serves as cofactor.

The protein resides in the cytoplasm. It catalyses the reaction tRNA(Cys) + L-cysteine + ATP = L-cysteinyl-tRNA(Cys) + AMP + diphosphate. The polypeptide is Cysteine--tRNA ligase (Kocuria rhizophila (strain ATCC 9341 / DSM 348 / NBRC 103217 / DC2201)).